The primary structure comprises 430 residues: 3-phosphoshikimate 1-carboxyvinyltransferase (430 aa).

3 residues coordinate 3-phosphoshikimate: lysine 25, serine 26, and arginine 30. Lysine 25 serves as a coordination point for phosphoenolpyruvate. 2 residues coordinate phosphoenolpyruvate: glycine 98 and arginine 126. 3-phosphoshikimate is bound by residues serine 169, serine 170, glutamine 171, serine 198, glutamate 313, and histidine 342. Glutamine 171 is a binding site for phosphoenolpyruvate. Glutamate 313 acts as the Proton acceptor in catalysis. Phosphoenolpyruvate-binding residues include arginine 346, arginine 387, and lysine 412.

It belongs to the EPSP synthase family. As to quaternary structure, monomer.

The protein localises to the cytoplasm. The catalysed reaction is 3-phosphoshikimate + phosphoenolpyruvate = 5-O-(1-carboxyvinyl)-3-phosphoshikimate + phosphate. It functions in the pathway metabolic intermediate biosynthesis; chorismate biosynthesis; chorismate from D-erythrose 4-phosphate and phosphoenolpyruvate: step 6/7. Its function is as follows. Catalyzes the transfer of the enolpyruvyl moiety of phosphoenolpyruvate (PEP) to the 5-hydroxyl of shikimate-3-phosphate (S3P) to produce enolpyruvyl shikimate-3-phosphate and inorganic phosphate. The protein is 3-phosphoshikimate 1-carboxyvinyltransferase of Mycobacterium leprae (strain TN).